Here is a 222-residue protein sequence, read N- to C-terminus: Cytidylate kinase (222 aa).

An ATP-binding site is contributed by 11–19; the sequence is GPAGAGKST.

Belongs to the cytidylate kinase family. Type 1 subfamily.

The protein resides in the cytoplasm. It carries out the reaction CMP + ATP = CDP + ADP. It catalyses the reaction dCMP + ATP = dCDP + ADP. In Desulforamulus reducens (strain ATCC BAA-1160 / DSM 100696 / MI-1) (Desulfotomaculum reducens), this protein is Cytidylate kinase.